Consider the following 127-residue polypeptide: MIRTMMNAKIHRARVTESNLNYVGSITIDADILDAVDILPNEKVAIVNNNNGARFETYVIKGERGSGKICLNGAASRLVEVDDVVIIMTYAQLNETEIADHAPKVAVMNEKNEIVEMIHEKENTVVL.

Residue S25 is the Schiff-base intermediate with substrate; via pyruvic acid of the active site. The residue at position 25 (S25) is a Pyruvic acid (Ser). T57 is a binding site for substrate. The active-site Proton donor is the Y58. G73–A75 provides a ligand contact to substrate.

Belongs to the PanD family. In terms of assembly, heterooctamer of four alpha and four beta subunits. Pyruvate is required as a cofactor. In terms of processing, is synthesized initially as an inactive proenzyme, which is activated by self-cleavage at a specific serine bond to produce a beta-subunit with a hydroxyl group at its C-terminus and an alpha-subunit with a pyruvoyl group at its N-terminus.

The protein localises to the cytoplasm. It catalyses the reaction L-aspartate + H(+) = beta-alanine + CO2. It functions in the pathway cofactor biosynthesis; (R)-pantothenate biosynthesis; beta-alanine from L-aspartate: step 1/1. Its function is as follows. Catalyzes the pyruvoyl-dependent decarboxylation of aspartate to produce beta-alanine. This is Aspartate 1-decarboxylase from Staphylococcus carnosus (strain TM300).